Reading from the N-terminus, the 499-residue chain is Potassium voltage-gated channel subfamily A member 2 (499 aa).

Positions 1–27 (MTVATGEPADEAAALPGHPQDTYDPEA) are disordered. A tetramerization domain region spans residues 1-125 (MTVATGEPAD…YELGEEAMEM (125 aa)). At 1–160 (MTVATGEPAD…LLFEYPESSG (160 aa)) the chain is on the cytoplasmic side. The chain crosses the membrane as a helical span at residues 161–182 (PARIIAIVSVMVILISIVSFCL). The Extracellular segment spans residues 183-221 (ETLPIFRDENEDMHGGGVTFHTYSNSTIGYQQSTSFTDP). The N-linked (GlcNAc...) asparagine glycan is linked to asparagine 207. The chain crosses the membrane as a helical span at residues 222 to 243 (FFIVETLCIIWFSFEFLVRFFA). Cysteine 244 is lipidated: S-palmitoyl cysteine. Over 244 to 254 (CPSKAGFFTNI) the chain is Cytoplasmic. A helical transmembrane segment spans residues 255 to 275 (MNIIDIVAIIPYFITLGTELA). Residues 276–289 (EKPEDAQQGQQAMS) are Extracellular-facing. Residues 290 to 310 (LAILRVIRLVRVFRIFKLSRH) form a helical; Voltage-sensor membrane-spanning segment. Topologically, residues 311–325 (SKGLQILGQTLKASM) are cytoplasmic. The segment at 312-325 (KGLQILGQTLKASM) is S4-S5 linker. Residues 326 to 347 (RELGLLIFFLFIGVILFSSAVY) form a helical membrane-spanning segment. Residues 348 to 361 (FAEADERESQFPSI) are Extracellular-facing. Residues 362–373 (PDAFWWAVVSMT) constitute an intramembrane region (helical). The short motif at 374–379 (TVGYGD) is the Selectivity filter element. Residues 374 to 381 (TVGYGDMV) lie within the membrane without spanning it. The Extracellular segment spans residues 382 to 388 (PTTIGGK). A helical membrane pass occupies residues 389-417 (IVGSLCAIAGVLTIALPVPVIVSNFNYFY). Topologically, residues 418–499 (HRETEGEEQA…VNITKMLTDV (82 aa)) are cytoplasmic. Tyrosine 429 carries the post-translational modification Phosphotyrosine. Phosphoserine is present on residues serine 434, serine 440, serine 441, and serine 449. Phosphotyrosine is present on tyrosine 458. Serine 468 is subject to Phosphoserine. The PDZ-binding signature appears at 497-499 (TDV).

This sequence belongs to the potassium channel family. A (Shaker) (TC 1.A.1.2) subfamily. Kv1.2/KCNA2 sub-subfamily. Homotetramer and heterotetramer with other channel-forming alpha subunits, such as KCNA1, KCNA4, KCNA5, KCNA6 and KCNA7. Channel activity is regulated by interaction with the beta subunits, including KCNAB1 and KCNAB2. Identified in a complex with KCNA1 and KCNAB2. Identified in a complex with KCNA5 and KCNAB1. Interacts with the beta subunit KCNAB1. Identified in a complex with KCNA4 and FYN. Interacts with PTK2B. Interacts (via C-terminus) with CTTN. Interacts (via N-terminal cytoplasmic domain) with RHOA (GTP-bound form); this regulates channel activity by reducing location at the cell surface in response to CHRM1 activation. Interacts with DRD2. Interacts with SIGMAR1; cocaine consumption leads to increased interaction. Interacts with ADAM22. Interacts with CNTNAP2. Interacts (via C-terminus) with the PDZ domains of DLG1, DLG2 and DLG4. Interacts with ADAM11. Interacts with LYNX1. In terms of processing, phosphorylated on tyrosine residues; phosphorylation increases in response to ischemia. Phosphorylated on tyrosine residues by activated PTK2B/PYK2. Phosphorylation on tyrosine residues suppresses ion channel activity. Phosphorylated on tyrosine residues in response to CHRM1 activation; this abolishes interaction with CTTN. This is probably due to endocytosis of the phosphorylated channel subunits. Phosphorylated on serine residues in response to increased cAMP levels; phosphorylation is apparently not catalyzed by PKA. Post-translationally, N-glycosylated, with complex, sialylated N-glycans. Expressed in a wide variety of gastrointestinal smooth muscles. Not expressed in portal vein, renal artery, and uterus.

Its subcellular location is the cell membrane. The protein resides in the membrane. It localises to the cell projection. It is found in the axon. The protein localises to the synapse. Its subcellular location is the presynaptic cell membrane. The protein resides in the synaptosome. It localises to the endoplasmic reticulum membrane. It is found in the dendrite. The protein localises to the lamellipodium membrane. Its subcellular location is the cell junction. The protein resides in the paranodal septate junction. The catalysed reaction is K(+)(in) = K(+)(out). Inhibited by 4-aminopyridine (4-AP). Inhibited by dendrotoxin (DTX) and charybdotoxin (CTX), but not by tetraethylammonium (TEA). Inhibited by tityustoxin-K alpha (TsTX-Kalpha), a toxin that is highly specific for KCNA2. Inhibited by maurotoxin. Inhibited by kappaM conotoxins kappaM-RIIIJ and kappaM-RIIIK. In terms of biological role, voltage-gated potassium channel that mediates transmembrane potassium transport in excitable membranes, primarily in the brain and the central nervous system, but also in the cardiovascular system. Prevents aberrant action potential firing and regulates neuronal output. Forms tetrameric potassium-selective channels through which potassium ions pass in accordance with their electrochemical gradient. The channel alternates between opened and closed conformations in response to the voltage difference across the membrane. Can form functional homotetrameric channels and heterotetrameric channels that contain variable proportions of KCNA1, KCNA2, KCNA4, KCNA5, KCNA6, KCNA7, and possibly other family members as well; channel properties depend on the type of alpha subunits that are part of the channel. Channel properties are modulated by cytoplasmic beta subunits that regulate the subcellular location of the alpha subunits and promote rapid inactivation of delayed rectifier potassium channels. In vivo, membranes probably contain a mixture of heteromeric potassium channel complexes, making it difficult to assign currents observed in intact tissues to any particular potassium channel family member. Homotetrameric KCNA2 forms a delayed-rectifier potassium channel that opens in response to membrane depolarization, followed by slow spontaneous channel closure. In contrast, a heteromultimer formed by KCNA2 and KCNA4 shows rapid inactivation. Regulates neuronal excitability and plays a role as pacemaker in the regulation of neuronal action potentials. KCNA2-containing channels play a presynaptic role and prevent hyperexcitability and aberrant action potential firing. Response to toxins that are selective for KCNA2-containing potassium channels suggests that in Purkinje cells, dendritic subthreshold KCNA2-containing potassium channels prevent random spontaneous calcium spikes, suppressing dendritic hyperexcitability without hindering the generation of somatic action potentials, and thereby play an important role in motor coordination. Plays a role in the induction of long-term potentiation of neuron excitability in the CA3 layer of the hippocampus. May function as down-stream effector for G protein-coupled receptors and inhibit GABAergic inputs to basolateral amygdala neurons. May contribute to the regulation of neurotransmitter release, such as gamma-aminobutyric acid (GABA). Contributes to the regulation of the axonal release of the neurotransmitter dopamine. Reduced KCNA2 expression plays a role in the perception of neuropathic pain after peripheral nerve injury, but not acute pain. Plays a role in the regulation of the time spent in non-rapid eye movement (NREM) sleep. This is Potassium voltage-gated channel subfamily A member 2 (KCNA2) from Canis lupus familiaris (Dog).